We begin with the raw amino-acid sequence, 144 residues long: Necrosis-inducing secreted protein 1 (144 aa).

An N-terminal signal peptide occupies residues 1–19; it reads MQFRASIAAAAGLFALANA. Asn88, Asn126, and Asn133 each carry an N-linked (GlcNAc...) asparagine glycan. The segment at 103–132 is BAK1/SERK3-binding; the sequence is QYVVAAGLYSLYGASSSPTLSHYNVTVTVG.

It belongs to the NIS1 effector family.

The protein localises to the secreted. It is found in the host cytoplasm. Its function is as follows. Secreted effector that induces necrotic lesions in Nicotiana benthamiana. Interacts with the host receptor-like kinases (RLKs) BAK1/SERK3 and BKK1/SERK4, inhibits their kinase activity and suppresses INF1-induced pathogen-associated molecular pattern (PAMP)-triggered immunity (PTI) in N.benthamiana. Also interacts with the host receptor-like cytoplasmic kinase (RLCK) BIK1 and inhibits its kinase activity, thereby inhibiting PAMP-induced ROS generation. In PTI, phosphorylation relaying by RLKs and RLCKs is critical for the initiation of downstream signaling. The protein is Necrosis-inducing secreted protein 1 of Colletotrichum higginsianum (strain IMI 349063) (Crucifer anthracnose fungus).